Here is a 96-residue protein sequence, read N- to C-terminus: Large ribosomal subunit protein bL28 (96 aa).

Belongs to the bacterial ribosomal protein bL28 family.

This Methylobacterium nodulans (strain LMG 21967 / CNCM I-2342 / ORS 2060) protein is Large ribosomal subunit protein bL28.